The primary structure comprises 925 residues: Serine/threonine-protein kinase PLK4 (925 aa).

The region spanning 12–265 is the Protein kinase domain; it reads FKVGNLLGKG…LSSVLDHPFM (254 aa). ATP is bound by residues 18–26 and Lys-41; that span reads LGKGSFAGV. 2 positions are modified to N6-acetyllysine: Lys-45 and Lys-46. Asp-136 serves as the catalytic Proton acceptor. Disordered regions lie at residues 262-283 and 328-394; these read HPFMSRNPSPKSKDVGTVEDSM and KNSS…KTYS. The segment covering 330–341 has biased composition (low complexity); that stretch reads SSDFSSGDGSNF. Positions 342 to 353 are enriched in polar residues; it reads CTQWGNPEQEAN. Residues 359 to 369 are compositionally biased toward basic and acidic residues; the sequence is RVIEDAEERPH. Residues 381–391 show a composition bias toward polar residues; the sequence is RASPSNQSRAK. Ser-400 bears the Phosphoserine mark. Residues 517 to 538 are disordered; it reads EVMPQEPGLHPHSEQSKNRSME. The span at 525 to 536 shows a compositional bias: basic and acidic residues; that stretch reads LHPHSEQSKNRS. Residues 547–660 enclose the Cryptic POLO box 1 (CPB1) domain; the sequence is TLRSITSPLI…SRFIQLVRSK (114 aa). The Cryptic POLO box 2 (CPB2) domain maps to 661–774; that stretch reads TPKITYFTRY…GRKPGNTSSP (114 aa). A Phosphoserine modification is found at Ser-778. One can recognise a POLO box domain in the interval 841–919; sequence QLLKSVFVKN…LSSILLMFSN (79 aa).

It belongs to the protein kinase superfamily. Ser/Thr protein kinase family. CDC5/Polo subfamily. In terms of assembly, homodimer. Interacts with CEP152 (via N-terminus). Interacts with CEP78; this interaction may be important for proper PLK4 localization to the centriole and PLK4-induced overduplication of centrioles. Interacts with CEP131. Interacts simultaneously with TENT5C and CEP192. Interacts with TENT5C; this interaction leads to the TENT5C recruitment in the centrosome. Interacts with CEP85; this interaction may be important in cell migration and centriole assembly. Post-translationally, ubiquitinated; leading to its degradation by the proteasome. Deubiquitinated by USP54; leading to PLK4 stabilization. Tyrosine-phosphorylated by TEC. In terms of processing, acetylation by KAT2A and KAT2B impairs kinase activity by shifting the kinase to an inactive conformation. Expressed in tissues associated with mitotic and meiotic cell division. Highly expressed in testis.

The protein localises to the cytoplasm. The protein resides in the cytoskeleton. It is found in the microtubule organizing center. It localises to the centrosome. Its subcellular location is the centriole. The protein localises to the nucleus. The protein resides in the nucleolus. It is found in the cleavage furrow. It carries out the reaction L-seryl-[protein] + ATP = O-phospho-L-seryl-[protein] + ADP + H(+). It catalyses the reaction L-threonyl-[protein] + ATP = O-phospho-L-threonyl-[protein] + ADP + H(+). Serine/threonine-protein kinase that plays a central role in centriole duplication. Able to trigger procentriole formation on the surface of the parental centriole cylinder, leading to the recruitment of centriole biogenesis proteins such as SASS6, CPAP, CCP110, CEP135 and gamma-tubulin. When overexpressed, it is able to induce centrosome amplification through the simultaneous generation of multiple procentrioles adjoining each parental centriole during S phase. Phosphorylates 'Ser-151' of FBXW5 during the G1/S transition, leading to inhibit FBXW5 ability to ubiquitinate SASS6. Its central role in centriole replication suggests a possible role in tumorigenesis, centrosome aberrations being frequently observed in tumors. Phosphorylates CDC25C and CHEK2. Also involved in deuterosome-mediated centriole amplification in multiciliated that can generate more than 100 centrioles. Also involved in trophoblast differentiation by phosphorylating HAND1, leading to disrupt the interaction between HAND1 and MDFIC and activate HAND1. Required for the recruitment of STIL to the centriole and for STIL-mediated centriole amplification. Phosphorylates CEP131 at 'Ser-78' and PCM1 at 'Ser-372' which is essential for proper organization and integrity of centriolar satellites. The chain is Serine/threonine-protein kinase PLK4 from Mus musculus (Mouse).